The primary structure comprises 315 residues: Homoserine kinase (315 aa).

97–107 (PPARGLGSSAT) contacts ATP.

Belongs to the GHMP kinase family. Homoserine kinase subfamily.

The protein localises to the cytoplasm. It catalyses the reaction L-homoserine + ATP = O-phospho-L-homoserine + ADP + H(+). Its pathway is amino-acid biosynthesis; L-threonine biosynthesis; L-threonine from L-aspartate: step 4/5. Functionally, catalyzes the ATP-dependent phosphorylation of L-homoserine to L-homoserine phosphate. The sequence is that of Homoserine kinase from Prochlorococcus marinus (strain MIT 9312).